A 3054-amino-acid chain; its full sequence is MALIFGTVNANILKEVFGGARMACVTSAHMAGANGSILKKAEETSRAIMHKPVIFGEDYITEADLPYTPLHLEVDAEMERMYYLGRRALTHGKRRKVSVNNKRNRRRKVAKTYVGRDSIVEKIVVPHTERKVDTTAAVEDICNEATTQLVHNSMPKRKKQKNFLPATSLSNVYAQTWSIVRKRHMQVEIISKKSVRARVKRFEGSVQLFASVRHMYGERKRVDLRIDNWQQETLLDLAKRFKNERVDQSKLTFGSSGLVLRQGSYGPAHWYRHGMFIVRGRSDGMLVDARAKVTFAVCHSMTHYSDKSISEAFFIPYSKKFLELRPDGISHECTRGVSVERCGEVAAILTQALSPCGKITCKRCMVETPDIVEGESGESVTNQGKLLAMLKEQYPDFPMAEKLLTRFLQQKSLVNTNLTACVSVKQLIGDRKQAPFTHVLAVSEILFKGNKLTGADLEEASTHMLEIARFLNNRTENMRIGHLGSFRNKISSKAHVNNALMCDNQLDQNGNFIWGLRGAHAKRFLKGFFTEIDPNEGYDKYVIRKHIRGSRKLAIGNLIMSTDFQTLRQQIQGETIERKEIGNHCISMRNGNYVYPCCCVTLEDGKAQYSDLKHPTKRHLVIGNSGDSKYLDLPVLNEEKMYIANEGYCYMNIFFALLVNVKEEDAKDFTKFIRDTIVPKLGAWPTMQDVATACYLLSILYPDVLRAELPRILVDHDNKTMHVLDSYGSRTTGYHMLKMNTTSQLIEFVHSGLESEMKTYNVGGMNRDVVTQGAIEMLIKSIYKPHLMKQLLEEEPYIIVLAIVSPSILIAMYNSGTFEQALQMWLPNTMRLANLAAILSALAQKLTLADLFVQQRNLINEYAQVILDNLIDGVRVNHSLSLAMEIVTIKLATQEMDMALREGGYAVTSEKVHEMLEKNYVKALKDAWDELTWLEKFSAIRHSRKLLKFGRKPLIMKNTVDCGGHIDLSVKSLFKFHLELLKGTISRAVNGGARKVRVAKNAMTKGVFLKIYSMLPDVYKFITVSSVLSLLLTFLFQIDCMIRAHREAKVAAQLQKESEWDNIINRTFQYSKLENPIGYRSTAEERLQSEHPEAFEYYKFCIGKEDLVEQAKQPEIAYFEKIIAFITLVLMAFDAERSDGVFKILNKFKGILSSTEREIIYTQSLDDYVTTFDDNMTINLELNMDELHKTSLPGVTFKQWWNNQISRGNVKPHYRTEGHFMEFTRDTAASVASEISHSPARDFLVRGAVGSGKSTGLPYHLSKRGRVLMLEPTRPLTDNMHKQLRSEPFNCFPTLRMRGKSTFGSSPITVMTSGFALHHFARNIAEVKTYDFVIIDECHVNDASAIAFRNLLFEHEFEGKVLKVSATPPGREVEFTTQFPVKLKIEEALSFQEFVSLQGTGANADVISCGDNILVYVASYNDVDSLGKLLVQKGYKVSKIDGRTMKSGGTEIITEGTSVKKHFIVATNIIENGVTIDIDVVVDFGTKVVPVLDVDNRAVQYNKTVVSYGERIQKLGRVGRHKEGVALRIGQTNKTLVEIPEMVATEAAFLCFMYNLPVTTQSVSTTLLENATLLQARTMAQFELSYFYTINFVRFDGSMHPVIHDKLKRFKLHTCETFLNKLAIPNKGLSSWLTSGEYKRLGYIAEDAGIRIPFVCKEIPDSLHEEIWHIVVAHKGDSGIGRLTSVQAAKVVYTLQTDVHSIARTLACINRRIADEQMKQSHFEAATGRAFSFTNYSIQSIFDTLKANYATKHTKENIAVLQQAKDQLLEFSNLAKDQDVTGIIQDFNHLETIYLQSDSEVAKHLKLKSHWNKSQITRDIIIALSVLIGGGWMLATYFKDKFNEPVYFQGKKNQKHKLKMREARGARGQYEVAAEPEALEHYFGSAYNNKGKRKGTTRGMGAKSRKFINMYGFDPTDFSYIRFVDPLTGHTIDESTNAPIDLVQHEFGKVRTRMLIDDEIEPQSLSTHTTIHAYLVNSGTKKVLKVDLTPHSSLRASEKSTAIMGFPERENELRQTGMAVPVAYDQLPPKNEDLTFEGESLFKGPRDYNPISSTICHLTNESDGHTTSLYGIGFGPFIITNKHLFRRNNGTLLVQSLHGVFKVKNTTTLQQHLIDGRDMIIIRMPKDFPPFPQKLKFREPQREERICLVTTNFQTKSMSSMVSDTSCTFPSSDGIFWKHWIQTKDGQCGSPLVSTRDGFIVGIHSASNFTNTNNYFTSVPKNFMELLTNQEAQQWVSGWRLNADSVLWGGHKVFMSKPEEPFQPVKEATQLMNELVYSQGEKRKWVVEALSGNLRPVAECPSQLVTKHVVKGKCPLFELYLQLNPEKEAYFKPMMGAYKPSRLNREAFLKDILKYASEIEIGNVDCDLLELAISMLVTKLKALGFPTVNYITDPEEIFSALNMKAAMGALYKGKKKEALSELTLDEQEAMLKASCLRLYTGKLGIWNGSLKAELRPIEKVENNKTRTFTAAPIDTLLAGKVCVDDFNNQFYDLNIKAPWTVGMTKFYQGWNELMEALPSGWVYCDADGSQFDSSLTPFLINAVLKVRLAFMEEWDIGEQMLRNLYTEIVYTPILTPDGTIIKKHKGNNSGQPSTVVDNTLMVIIAMLYTCEKCGINKEEIVYYVNGDDLLIAIHPDKAERLSRFKESFGELGLKYEFDCTTRDKTQLWFMSHRALERDGMYIPKLEEERIVSILEWDRSKEPSHRLEAICASMIEAWGYDKLVEEIRNFYAWVLEQAPYSQLAEEGKAPYLAETALKFLYTSQHGTNSEIEEYLKVLYDYDIPTTENLYFQSGTVDAGADAGKKKDQKDDKVAEQASKDRDVNAGTSGTFSVPRINAMATKLQYPRMRGEVVVNLNHLLGYKPQQIDLSNARATHEQFAAWHQAVMTAYGVNEEQMKILLNGFMVWCIENGTSPNLNGTWVMMDGEDQVSYPLKPMVENAQPTLRQIMTHFSDLAEAYIEMRNRERPYMPRYGLQRNITDMSLSRYAFDFYELTSKTPVRAREAHMQMKAAAVRNSGTRLFGLDGNVGTAEEDTERHTAHDVNRNMHTLLGVRQ.

The Peptidase S30 domain occupies 163–304; sequence FLPATSLSNV…FAVCHSMTHY (142 aa). Residues His214, Asp223, and Ser256 each act as for P1 proteinase activity in the active site. The Involved in interaction with stylet and aphid transmission motif lies at 358–361; that stretch reads KITC. An Involved in virions binding and aphid transmission motif is present at residues 615–617; sequence PTK. A Peptidase C6 domain is found at 641–763; sequence MYIANEGYCY…ESEMKTYNVG (123 aa). Catalysis depends on for helper component proteinase activity residues Cys649 and His722. In terms of domain architecture, Helicase ATP-binding spans 1234–1386; the sequence is EISHSPARDF…TQFPVKLKIE (153 aa). An ATP-binding site is contributed by 1247 to 1254; the sequence is GAVGSGKS. Residues 1336–1339 carry the DECH box motif; sequence DECH. One can recognise a Helicase C-terminal domain in the interval 1401-1564; sequence GANADVISCG…NLPVTTQSVS (164 aa). The Nuclear localization signal motif lies at 1889–1896; it reads NKGKRKGT. Tyr1911 carries the post-translational modification O-(5'-phospho-RNA)-tyrosine. The Peptidase C4 domain maps to 2038-2255; that stretch reads GESLFKGPRD…VLWGGHKVFM (218 aa). Active-site for nuclear inclusion protein A activity residues include His2083, Asp2118, and Cys2188. In terms of domain architecture, RdRp catalytic spans 2521-2641; sequence WVYCDADGSQ…AIHPDKAERL (121 aa). Residues 2798–2827 form a disordered region; it reads GADAGKKKDQKDDKVAEQASKDRDVNAGTS. Basic and acidic residues predominate over residues 2801 to 2822; it reads AGKKKDQKDDKVAEQASKDRDV. Thr3038 bears the Phosphothreonine mark.

This sequence belongs to the potyviridae genome polyprotein family. As to quaternary structure, interacts with host eIF4E protein (via cap-binding region); this interaction mediates the translation of the VPg-viral RNA conjugates. Part of a complex that comprises VPg, RNA, host EIF4E and EIF4G; this interaction mediates the translation of the VPg-viral RNA conjugates. Interaction is possible in susceptible hosts but impaired in resistant plants: the VPg of strain HAT interacts with tomato eIF4E1 and eIF4E2 as well as with Capsicum annuum eIF4E1 susceptible alleles pvr2(+), pvr2(3) and pvr2(9) but not with the resistant allele pvr2(2), the VPg of strain CAA10 interacts with C.annuum eIF4E1 susceptible alleles pvr2(+), pvr2(2), pvr2(3) and pvr2(9), the VPg of strain NW interacts at least with C.annuum eIF4E1. In terms of assembly, homodimer; disulfide-linked. In terms of processing, VPg is uridylylated by the polymerase and is covalently attached to the 5'-end of the genomic RNA. This uridylylated form acts as a nucleotide-peptide primer for the polymerase. Post-translationally, potyviral RNA is expressed as two polyproteins which undergo post-translational proteolytic processing. Genome polyprotein is processed by NIa-pro, P1 and HC-pro proteinases resulting in the production of at least ten individual proteins. P3N-PIPO polyprotein is cleaved by P1 and HC-pro proteinases resulting in the production of three individual proteins. The P1 proteinase and the HC-pro cleave only their respective C-termini autocatalytically. 6K1 is essential for proper proteolytic separation of P3 from CI.

The protein resides in the host cytoplasmic vesicle. It localises to the host nucleus. It is found in the virion. It catalyses the reaction RNA(n) + a ribonucleoside 5'-triphosphate = RNA(n+1) + diphosphate. The catalysed reaction is Hydrolyzes glutaminyl bonds, and activity is further restricted by preferences for the amino acids in P6 - P1' that vary with the species of potyvirus, e.g. Glu-Xaa-Xaa-Tyr-Xaa-Gln-|-(Ser or Gly) for the enzyme from tobacco etch virus. The natural substrate is the viral polyprotein, but other proteins and oligopeptides containing the appropriate consensus sequence are also cleaved.. It carries out the reaction Hydrolyzes a Gly-|-Gly bond at its own C-terminus, commonly in the sequence -Tyr-Xaa-Val-Gly-|-Gly, in the processing of the potyviral polyprotein.. Functionally, required for aphid transmission and also has proteolytic activity. Only cleaves a Gly-Gly dipeptide at its own C-terminus. Interacts with virions and aphid stylets. Acts as a suppressor of RNA-mediated gene silencing, also known as post-transcriptional gene silencing (PTGS), a mechanism of plant viral defense that limits the accumulation of viral RNAs. May have RNA-binding activity. Has helicase activity. It may be involved in replication. In terms of biological role, indispensable for virus replication. Reduces the abundance of host transcripts related to jasmonic acid biosynthesis therefore altering the host defenses. In order to increase its own stability, decreases host protein degradation pathways. Its function is as follows. Indispensable for virus replication. Functionally, mediates the cap-independent, EIF4E-dependent translation of viral genomic RNAs. Binds to the cap-binding site of host EIF4E and thus interferes with the host EIF4E-dependent mRNA export and translation. VPg-RNA directly binds EIF4E and is a template for transcription. Also forms trimeric complexes with EIF4E-EIF4G, which are templates for translation. Has RNA-binding and proteolytic activities. In terms of biological role, an RNA-dependent RNA polymerase that plays an essential role in the virus replication. Its function is as follows. Involved in aphid transmission, cell-to-cell and systemis movement, encapsidation of the viral RNA and in the regulation of viral RNA amplification. In Capsicum annuum (Capsicum pepper), this protein is Genome polyprotein.